A 378-amino-acid polypeptide reads, in one-letter code: Chaperone protein DnaJ (378 aa).

The J domain maps to 5 to 70 (DYYEVLGVGR…NKKAAYDQFG (66 aa)). Residues 134–212 (GLTKELRIPT…CHGDGRVEKT (79 aa)) form a CR-type zinc finger. Zn(2+) contacts are provided by Cys147, Cys150, Cys164, Cys167, Cys186, Cys189, Cys200, and Cys203. 4 CXXCXGXG motif repeats span residues 147–154 (CDVCDGSG), 164–171 (CTTCHGQG), 186–193 (CPTCHGRG), and 200–207 (CAKCHGDG).

This sequence belongs to the DnaJ family. Homodimer. Zn(2+) is required as a cofactor.

It is found in the cytoplasm. In terms of biological role, participates actively in the response to hyperosmotic and heat shock by preventing the aggregation of stress-denatured proteins and by disaggregating proteins, also in an autonomous, DnaK-independent fashion. Unfolded proteins bind initially to DnaJ; upon interaction with the DnaJ-bound protein, DnaK hydrolyzes its bound ATP, resulting in the formation of a stable complex. GrpE releases ADP from DnaK; ATP binding to DnaK triggers the release of the substrate protein, thus completing the reaction cycle. Several rounds of ATP-dependent interactions between DnaJ, DnaK and GrpE are required for fully efficient folding. Also involved, together with DnaK and GrpE, in the DNA replication of plasmids through activation of initiation proteins. This Shewanella oneidensis (strain ATCC 700550 / JCM 31522 / CIP 106686 / LMG 19005 / NCIMB 14063 / MR-1) protein is Chaperone protein DnaJ.